The following is a 290-amino-acid chain: Xylanase inhibitor protein 2 (290 aa).

The first 27 residues, 1–27, serve as a signal peptide directing secretion; that stretch reads MGLVHALLPFAAAAALLLLAAPPPATA. In terms of domain architecture, GH18 spans 30 to 290; sequence PGLAVYWGRH…DKKANYTGEG (261 aa). A disulfide bridge connects residues Cys-49 and Cys-89. Residue Asn-112 is glycosylated (N-linked (GlcNAc...) asparagine). Cys-187 and Cys-216 are joined by a disulfide. Asn-285 carries N-linked (GlcNAc...) asparagine glycosylation.

The protein belongs to the glycosyl hydrolase 18 family. Xylanase inhibitor subfamily. As to quaternary structure, binds to fungal GH10 xylanases.

Its subcellular location is the secreted. In terms of biological role, fungal xylanase inhibitor. Possesses competitive inhibiting activity against several fungal endo-1,4-beta-D-xylanases belonging to glycoside hydrolase family 10 (GH10) and family 11 (GH11). May function in plant defense against secreted fungal pathogen xylanases. Is similar to class III chitinases, but does not exhibit chitinase activity. This chain is Xylanase inhibitor protein 2, found in Oryza sativa subsp. japonica (Rice).